We begin with the raw amino-acid sequence, 574 residues long: Urease subunit alpha (574 aa).

Residues 131 to 574 (GAIDSHIHFI…LPMAQRYLLL (444 aa)) enclose the Urease domain. The Ni(2+) site is built by H136, H138, and K219. N6-carboxylysine is present on K219. H221 is a binding site for substrate. H248 and H274 together coordinate Ni(2+). The Proton donor role is filled by H322. A Ni(2+)-binding site is contributed by D362. A disordered region spans residues 384-403 (KVQRGPLPEDAANPRGSRND).

The protein belongs to the metallo-dependent hydrolases superfamily. Urease alpha subunit family. Heterotrimer of UreA (gamma), UreB (beta) and UreC (alpha) subunits. Three heterotrimers associate to form the active enzyme. Ni cation is required as a cofactor. In terms of processing, carboxylation allows a single lysine to coordinate two nickel ions.

Its subcellular location is the cytoplasm. The enzyme catalyses urea + 2 H2O + H(+) = hydrogencarbonate + 2 NH4(+). It functions in the pathway nitrogen metabolism; urea degradation; CO(2) and NH(3) from urea (urease route): step 1/1. This is Urease subunit alpha from Prochlorococcus marinus (strain MIT 9313).